Consider the following 600-residue polypeptide: Leiomodin-1 (600 aa).

Serine 12 carries the post-translational modification Phosphoserine. Disordered regions lie at residues 38–61 (VVDPDGSVPVGLRQRNQTEKQSTG), 80–324 (MQRE…PLER), and 472–573 (DKQR…QEKN). Basic and acidic residues-rich tracts occupy residues 80-127 (MQRE…EPKR), 134-240 (FSRD…EKMK), 247-256 (DMKKEDEKVK), 263-292 (DTKKDDEKVKKNEPLHEKEAKDDSKTKTPE), and 472-497 (DKQRQKRLQEQRQAQEAKGEKKDLLE). Phosphoserine occurs at positions 85 and 135. A run of 8 repeats spans residues 165–180 (AAVDKKEAGKDGRGEE), 181–196 (RAVATKKEEEKKGSDR), 197–212 (NTGLSRDKDKKREEMK), 213–228 (EVAKKEDDEKVKGERR), 229–244 (NTDTRKEGEKMKRAGG), 245–260 (NTDMKKEDEKVKRGTG), 261–276 (NTDTKKDDEKVKKNEP), and 277–293 (LHEKEAKDDSKTKTPEK). The segment at 165–293 (AAVDKKEAGK…DDSKTKTPEK (129 aa)) is 8 X approximate tandem repeats. The 5 X 4 AA approximate tandem repeats stretch occupies residues 508 to 527 (SPKPSPQPSPKPSPKNSPKK). Pro residues-rich tracts occupy residues 510–522 (KPSPQPSPKPSPK) and 532–543 (AAPPPPPPPLAP). Serine 555 is modified (phosphoserine). The 20-residue stretch at 574–593 (SRDQLLAAIRSSNLKQLKKV) folds into the WH2 domain.

The protein belongs to the tropomodulin family. As to expression, detected in lung vascular smooth muscle (at protein level). Detected in thyroid and extraocular smooth muscle, but not skeletal muscle. Detected in heart, aorta, skeletal muscle, colon, urinary bladder, uterus, stomach, and small intestine.

Its subcellular location is the cytoplasm. It localises to the myofibril. The protein resides in the sarcomere. It is found in the cytoskeleton. Required for proper contractility of visceral smooth muscle cells. Mediates nucleation of actin filaments. The protein is Leiomodin-1 (LMOD1) of Homo sapiens (Human).